Reading from the N-terminus, the 154-residue chain is Endoribonuclease YbeY (154 aa).

Zn(2+) contacts are provided by histidine 117, histidine 121, and histidine 127.

Belongs to the endoribonuclease YbeY family. It depends on Zn(2+) as a cofactor.

Its subcellular location is the cytoplasm. Functionally, single strand-specific metallo-endoribonuclease involved in late-stage 70S ribosome quality control and in maturation of the 3' terminus of the 16S rRNA. The chain is Endoribonuclease YbeY from Polaromonas sp. (strain JS666 / ATCC BAA-500).